The sequence spans 1456 residues: ABC-type transporter eriD (1456 aa).

The tract at residues 1–65 (MAENEKVTYG…DPRMDPLSGK (65 aa)) is disordered. A compositionally biased stretch (polar residues) spans 30 to 40 (SMTNASRSSVY). In terms of domain architecture, ABC transporter 1 spans 118–372 (LDIPGLARDI…FIDMGFECPP (255 aa)). The next 6 helical transmembrane spans lie at 481-501 (NFLT…SIFY), 515-535 (ALLF…ILQI), 561-581 (VLCD…VLYF), 590-610 (GAFF…SMIF), 623-643 (AMAP…FTIP), and 734-754 (ILFG…EFIA). The interval 775–799 (EGASEDEEAGTGSTGTRTQEEPVDK) is disordered. The region spanning 813-1056 (FHWEDVIYDI…IIDYFEGQGA (244 aa)) is the ABC transporter 2 domain. Position 849–856 (849–856 (GASGAGKT)) interacts with ATP. Helical transmembrane passes span 1148 to 1168 (YIYS…FSFF), 1184 to 1204 (VFMG…HFVT), 1233 to 1253 (LPWN…PVGM), 1269 to 1289 (LMFL…HMLI), 1301 to 1321 (IASL…GPSG), 1337 to 1357 (PFTY…PAFC), and 1423 to 1443 (FGFL…FYWL).

This sequence belongs to the ABC transporter superfamily. ABCG family. PDR (TC 3.A.1.205) subfamily.

The protein localises to the membrane. Its function is as follows. ABC-type transporter; part of the gene cluster that mediates the biosynthesis of erinacines, cyathane-xylosides that show unique biological activities, including leishmanicidal activity, stimulating activity for nerve growth-factor synthesis, and agonistic activity toward the kappa opioid receptor. This is ABC-type transporter eriD from Hericium erinaceus (Lion's mane mushroom).